We begin with the raw amino-acid sequence, 62 residues long: Large ribosomal subunit protein bL28 (62 aa).

The segment at 1–27 (MARECYITGRKARSGNKRSHAMNKSKR) is disordered. Basic residues predominate over residues 10-27 (RKARSGNKRSHAMNKSKR).

This sequence belongs to the bacterial ribosomal protein bL28 family.

This Shouchella clausii (strain KSM-K16) (Alkalihalobacillus clausii) protein is Large ribosomal subunit protein bL28.